A 324-amino-acid chain; its full sequence is Nidogen-1 (324 aa).

The NIDO domain occupies 16–178; the sequence is PFLADLDTTD…GVWVFEIGSP (163 aa). Residue asparagine 97 is glycosylated (N-linked (GlcNAc...) asparagine). Sulfotyrosine occurs at positions 200 and 205. The tract at residues 219–259 is disordered; sequence TQPFPSHSPRRGYPDPHNVPRTLAPSYEATERPHGIPTERT. The span at 247–259 shows a compositional bias: basic and acidic residues; it reads ATERPHGIPTERT. One can recognise an EGF-like domain in the interval 295-324; it reads SQQTCANNRHQCSVHAECRDYATGFCCRCV. 2 disulfide bridges follow: cysteine 299–cysteine 312 and cysteine 306–cysteine 321.

Interacts with FBLN1. Interacts with LGALS3BP. Interacts with PLXDC1. Interacts with SVEP1. In terms of processing, N- and O-glycosylated.

The protein resides in the secreted. The protein localises to the extracellular space. It is found in the extracellular matrix. It localises to the basement membrane. Its function is as follows. Sulfated glycoprotein widely distributed in basement membranes and tightly associated with laminin. Also binds to collagen IV and perlecan. It probably has a role in cell-extracellular matrix interactions. This is Nidogen-1 (Nid1) from Rattus norvegicus (Rat).